The sequence spans 250 residues: Enoyl-[acyl-carrier-protein] reductase [NADPH] FabL (250 aa).

Residues 13 to 16 (SRGV), 36 to 38 (ARS), 62 to 63 (NV), and asparagine 89 each bind NADP(+). Catalysis depends on proton acceptor residues tyrosine 151 and lysine 158. NADP(+) contacts are provided by residues lysine 158 and 187 to 189 (IDT).

Belongs to the short-chain dehydrogenases/reductases (SDR) family. In terms of assembly, homotetramer.

It carries out the reaction a 2,3-saturated acyl-[ACP] + NADP(+) = a (2E)-enoyl-[ACP] + NADPH + H(+). The enzyme catalyses (2E)-butenoyl-[ACP] + NADPH + H(+) = butanoyl-[ACP] + NADP(+). It participates in lipid metabolism; fatty acid biosynthesis. With respect to regulation, inhibited by triclosan. Functionally, catalyzes the reduction of a carbon-carbon double bond in an enoyl moiety that is covalently linked to an acyl carrier protein (ACP). It confers resistance to triclosan. This is Enoyl-[acyl-carrier-protein] reductase [NADPH] FabL (fabL) from Bacillus subtilis (strain 168).